The chain runs to 1523 residues: Slit homolog 3 protein (1523 aa).

A signal peptide spans 1 to 33; that stretch reads MAPGRTGAGAAVRARLALALALASILSGPPAAA. The region spanning 34-61 is the LRRNT domain; the sequence is CPTKCTCSAASVDCHGLGLRAVPRGIPR. LRR repeat units follow at residues 62–83, 86–107, 110–131, 134–155, 158–179, and 182–203; these read NAER…DFTG, NLRV…AFQD, QLER…LFQS, KLTR…AFRG, GVKN…AFRA, and DLEI…SFNH. N72 is a glycosylation site (N-linked (GlcNAc...) asparagine). A glycan (N-linked (GlcNAc...) asparagine) is linked at N192. The region spanning 215 to 265 is the LRRCT 1 domain; sequence NHLYCDCHLAWLSDWLRQRRTIGQFTLCMAPVHLRGFSVADVQKKEYVCPG. Residues 271 to 307 form the LRRNT 2 domain; it reads PACNANSLSCPSACSCSNNIVDCRGKGLTEIPANLPE. A disulfide bridge links C284 with C293. 5 LRR repeats span residues 308 to 329, 332 to 353, 356 to 377, 380 to 401, and 404 to 425; these read GIVE…AFIQ, KLKR…AFQG, SLTS…LFDG, SLQL…TFQD, and NLNL…LFAP. The LRRCT 2 domain maps to 437 to 487; sequence NPFVCDCHLKWLADYLQDNPIETSGARCSSPRRLANKRISQIKSKKFRCSG. Intrachain disulfides connect C441-C464, C443-C485, C505-C511, and C509-C518. The 37-residue stretch at 496–532 folds into the LRRNT 3 domain; the sequence is SSECFMDLVCPEKCRCEGTIVDCSNQKLSRIPSHLPE. LRR repeat units lie at residues 533–554, 558–579, 582–603, 606–627, and 630–651; these read YTTD…GIFK, NLRK…AFDG, GVQE…MFRG, GLKT…TFAG, and SVRL…AFTT. N-linked (GlcNAc...) asparagine glycosylation occurs at N563. A glycan (N-linked (GlcNAc...) asparagine) is linked at N622. Positions 663 to 713 constitute an LRRCT 3 domain; it reads NPFNCNCHMAWLGRWLRKRRIVSGNPRCQKPFFLKEIPIQDVAIQDFTCEG. Intrachain disulfides connect C667-C690 and C669-C711. One can recognise an LRRNT 4 domain in the interval 716–752; the sequence is ENSCQLSPRCPEQCTCVETVVRCSNRGLHTLPKGMPK. LRR repeat units follow at residues 753–774, 776–797, 800–821, and 824–845; these read DVTE…LSTF, QLTL…TFSN, HLST…AFNG, and SLRV…SFND. 3 N-linked (GlcNAc...) asparagine glycosylation sites follow: N784, N792, and N797. An LRRCT 4 domain is found at 857 to 907; it reads NPLHCDCSLRWLSEWIKAGYKEPGIARCSSPESMADRLLLTTPTHRFQCKG. 6 consecutive EGF-like domains span residues 918-953, 955-994, 996-1032, 1034-1072, 1074-1110, and 1119-1155; these read NACL…KDCT, PINT…QRCE, NPDD…ELCD, VIDY…KLCE, DNDD…LFCE, and QTSP…PRCE. 18 cysteine pairs are disulfide-bonded: C920–C931, C925–C941, C943–C952, C959–C970, C964–C982, C984–C993, C1000–C1011, C1005–C1020, C1022–C1031, C1038–C1051, C1045–C1060, C1062–C1071, C1078–C1089, C1083–C1098, C1100–C1109, C1123–C1134, C1128–C1143, and C1145–C1154. Residue N928 is glycosylated (N-linked (GlcNAc...) asparagine). An N-linked (GlcNAc...) asparagine glycan is attached at N1025. Residues 1158 to 1332 enclose the Laminin G-like domain; it reads ITVNFVGKDS…PQSLGVSPGC (175 aa). N-linked (GlcNAc...) asparagine glycans are attached at residues N1181 and N1247. 5 disulfides stabilise this stretch: C1305-C1332, C1355-C1364, C1372-C1382, C1377-C1391, and C1393-C1402. 2 consecutive EGF-like domains span residues 1340–1365 and 1368–1403; these read HGLC…PLCD and AQDP…PLCD. N-linked (GlcNAc...) asparagine glycosylation is present at N1406. The 37-residue stretch at 1408–1444 folds into the EGF-like 9 domain; it reads SANACSAFKCHHGQCHISDRGEPYCLCQPGFSGNHCE. Intrachain disulfides connect C1412–C1422, C1417–C1432, C1434–C1443, C1449–C1487, C1467–C1501, C1478–C1517, and C1482–C1519. The CTCK domain maps to 1449–1523; sequence CLGEIVREAI…HLECGCRECS (75 aa).

Its subcellular location is the secreted. In terms of biological role, may act as molecular guidance cue in cellular migration, and function may be mediated by interaction with roundabout homolog receptors. This is Slit homolog 3 protein (Slit3) from Rattus norvegicus (Rat).